The sequence spans 330 residues: Diacylglycerol O-acyltransferase 2 (330 aa).

2 consecutive transmembrane segments (helical) span residues 15–35 and 37–57; these read LETM…IMAF and LIVI…MFYF.

This sequence belongs to the diacylglycerol acyltransferase family.

Its subcellular location is the endoplasmic reticulum membrane. It carries out the reaction an acyl-CoA + a 1,2-diacyl-sn-glycerol = a triacyl-sn-glycerol + CoA. The enzyme catalyses all-trans-retinol + an acyl-CoA = an all-trans-retinyl ester + CoA. It catalyses the reaction 2-(9Z-octadecenoyl)-glycerol + (9Z)-octadecenoyl-CoA = 1,2-di-(9Z-octadecenoyl)-sn-glycerol + CoA. The catalysed reaction is 1,2-di-(9Z-octadecenoyl)-sn-glycerol + (9Z)-octadecenoyl-CoA = 1,2,3-tri-(9Z-octadecenoyl)-glycerol + CoA. It carries out the reaction all-trans-retinol + hexadecanoyl-CoA = all-trans-retinyl hexadecanoate + CoA. The enzyme catalyses 1-O-(9Z-octadecenyl)-glycerol + (9Z)-octadecenoyl-CoA = 1-O-(9Z-octadecyl)-3-(9Z-octadecenoyl)-glycerol + CoA. It catalyses the reaction 1-(9Z-octadecenoyl)-glycerol + (9Z)-octadecenoyl-CoA = 1,2-di-(9Z-octadecenoyl)-glycerol + CoA. The catalysed reaction is 1,2-di-(9Z-octadecenoyl)-sn-glycerol + hexadecanoyl-CoA = 1,2-di-(9Z)-octadecenoyl-3-hexadecanoyl-sn-glycerol + CoA. It carries out the reaction 1,3-di-(9Z-octadecenoyl)-glycerol + (9Z)-octadecenoyl-CoA = 1,2,3-tri-(9Z-octadecenoyl)-glycerol + CoA. The enzyme catalyses 2,3-di-(9Z)-octadecenoyl-sn-glycerol + (9Z)-octadecenoyl-CoA = 1,2,3-tri-(9Z-octadecenoyl)-glycerol + CoA. It catalyses the reaction 2-(9Z-octadecenoyl)-glycerol + hexadecanoyl-CoA = 1-hexadecanoyl-2-(9Z-octadecenoyl)-sn-glycerol + CoA. Its pathway is glycerolipid metabolism; triacylglycerol biosynthesis. Its function is as follows. Catalyzes the terminal and only committed step in triacylglycerol synthesis by using diacylglycerol and fatty acyl CoA as substrates. Required for storage lipid synthesis. The polypeptide is Diacylglycerol O-acyltransferase 2 (dgat2) (Dictyostelium discoideum (Social amoeba)).